Consider the following 350-residue polypeptide: Protein-arginine kinase (350 aa).

The 233-residue stretch at 21–253 (IVISSRIRLA…VRLADQEREA (233 aa)) folds into the Phosphagen kinase C-terminal domain. Residues 24 to 28 (SSRIR), His90, Arg124, 175 to 179 (RASTM), and 206 to 211 (RGLYGE) contribute to the ATP site. An RDXXRA motif of the pArg binding pocket involved in allosteric regulation motif is present at residues 336-341 (RDVHRA).

The protein belongs to the ATP:guanido phosphotransferase family.

It catalyses the reaction L-arginyl-[protein] + ATP = N(omega)-phospho-L-arginyl-[protein] + ADP + H(+). Appears to be allosterically activated by the binding of pArg-containing polypeptides to the pArg-binding pocket localized in the C-terminal domain of McsB. In terms of biological role, catalyzes the specific phosphorylation of arginine residues in proteins. This chain is Protein-arginine kinase, found in Moorella thermoacetica (strain ATCC 39073 / JCM 9320).